Here is a 276-residue protein sequence, read N- to C-terminus: Pantothenate synthetase (276 aa).

Residue 27-34 (MGNLHDGH) participates in ATP binding. H34 (proton donor) is an active-site residue. Q58 is a (R)-pantoate binding site. Residue Q58 coordinates beta-alanine. 145–148 (GKKD) serves as a coordination point for ATP. Q151 is a (R)-pantoate binding site. ATP-binding positions include I174 and 182–185 (LSSR).

This sequence belongs to the pantothenate synthetase family. As to quaternary structure, homodimer.

The protein resides in the cytoplasm. It catalyses the reaction (R)-pantoate + beta-alanine + ATP = (R)-pantothenate + AMP + diphosphate + H(+). Its pathway is cofactor biosynthesis; (R)-pantothenate biosynthesis; (R)-pantothenate from (R)-pantoate and beta-alanine: step 1/1. In terms of biological role, catalyzes the condensation of pantoate with beta-alanine in an ATP-dependent reaction via a pantoyl-adenylate intermediate. The sequence is that of Pantothenate synthetase from Aromatoleum aromaticum (strain DSM 19018 / LMG 30748 / EbN1) (Azoarcus sp. (strain EbN1)).